The primary structure comprises 610 residues: Ecto-NOX disulfide-thiol exchanger 2 (610 aa).

Positions 128–207 (KTVFVGGLPE…GRLHVDFAQA (80 aa)) constitute an RRM domain. 2 coiled-coil regions span residues 293–328 (IQSA…LSGI) and 381–505 (RREE…KESC).

Belongs to the ENOX family. Cu cation serves as cofactor. Post-translationally, glycosylated. In terms of tissue distribution, found in the sera of cancer patients with a wide variety of cancers including breast, prostate, lung and ovarian cancers, leukemias, and lymphomas. Not found in the serum of healthy volunteers or patients with disorders other than cancer. Probably shed into serum by cancer cells. Found on the cell borders of renal, kidney and ovarian carcinomas but not on the borders of surrounding non-cancerous stromal cells.

The protein localises to the cell membrane. Its subcellular location is the secreted. The protein resides in the extracellular space. Its activity is regulated as follows. Inhibited by the antitumor sulfonylurea LY181984, the vabilloid capsaicin, and retinoids. May be involved in cell growth. Probably acts as a terminal oxidase of plasma electron transport from cytosolic NAD(P)H via hydroquinones to acceptors at the cell surface. Hydroquinone oxidase activity alternates with a protein disulfide-thiol interchange/oxidoreductase activity which may control physical membrane displacements associated with vesicle budding or cell enlargement. The activities oscillate with a period length of 22 minutes and play a role in control of the ultradian cellular biological clock. The polypeptide is Ecto-NOX disulfide-thiol exchanger 2 (ENOX2) (Homo sapiens (Human)).